The following is a 130-amino-acid chain: Small ribosomal subunit protein uS9 (130 aa).

It belongs to the universal ribosomal protein uS9 family.

The protein is Small ribosomal subunit protein uS9 of Anoxybacillus flavithermus (strain DSM 21510 / WK1).